Consider the following 406-residue polypeptide: Sensor histidine kinase YxjM (406 aa).

At 1-13 (MNGQTPARHYYKK) the chain is on the cytoplasmic side. A helical membrane pass occupies residues 14–34 (LVPSLILILNCIQFLSHPTKA). At 35–36 (DP) the chain is on the extracellular side. Residues 37–57 (ILLAFVFAVYLAFIWIIPYVA) form a helical membrane-spanning segment. A topological domain (cytoplasmic) is located at residue Ser-58. 2 consecutive transmembrane segments (helical) span residues 59–79 (TAVS…FWAV) and 80–100 (SGQE…YAAF). Arg-101 is a topological domain (cytoplasmic). Residues 102 to 122 (LPSRLSLIFTACLIGGNILLL) traverse the membrane as a helical segment. At 123–125 (SSQ) the chain is on the extracellular side. Residues 126–146 (GGSLNTIISNISIMLGLYVLF) traverse the membrane as a helical segment. The Cytoplasmic portion of the chain corresponds to 147–406 (SSMRFRREAR…TNKEQKDEQR (260 aa)). The 188-residue stretch at 209–396 (DIHDSIGHEL…KIELSLPLMT (188 aa)) folds into the Histidine kinase domain. His-211 carries the phosphohistidine; by autocatalysis modification.

Its subcellular location is the cell membrane. The catalysed reaction is ATP + protein L-histidine = ADP + protein N-phospho-L-histidine.. In terms of biological role, probable member of the two-component regulatory system YxjM/YxjL. May activate YxjL by phosphorylation. The sequence is that of Sensor histidine kinase YxjM (yxjM) from Bacillus subtilis (strain 168).